Consider the following 70-residue polypeptide: Putative membrane protein insertion efficiency factor (70 aa).

The protein belongs to the UPF0161 family.

Its subcellular location is the cell inner membrane. Its function is as follows. Could be involved in insertion of integral membrane proteins into the membrane. The protein is Putative membrane protein insertion efficiency factor of Rhizorhabdus wittichii (strain DSM 6014 / CCUG 31198 / JCM 15750 / NBRC 105917 / EY 4224 / RW1) (Sphingomonas wittichii).